Here is a 343-residue protein sequence, read N- to C-terminus: Glyceraldehyde-3-phosphate dehydrogenase (343 aa).

Residues 12-13 (SI) and G114 contribute to the NAD(+) site. 143 to 145 (SCN) lines the D-glyceraldehyde 3-phosphate pocket. The Nucleophile role is filled by C144. Residue R172 coordinates NAD(+). Residue 198–199 (HG) coordinates D-glyceraldehyde 3-phosphate. Q307 is a binding site for NAD(+).

Belongs to the glyceraldehyde-3-phosphate dehydrogenase family. Homotetramer.

The protein localises to the cytoplasm. It carries out the reaction D-glyceraldehyde 3-phosphate + phosphate + NADP(+) = (2R)-3-phospho-glyceroyl phosphate + NADPH + H(+). It catalyses the reaction D-glyceraldehyde 3-phosphate + phosphate + NAD(+) = (2R)-3-phospho-glyceroyl phosphate + NADH + H(+). It functions in the pathway carbohydrate degradation; glycolysis; pyruvate from D-glyceraldehyde 3-phosphate: step 1/5. This Methanocaldococcus jannaschii (strain ATCC 43067 / DSM 2661 / JAL-1 / JCM 10045 / NBRC 100440) (Methanococcus jannaschii) protein is Glyceraldehyde-3-phosphate dehydrogenase (gap).